The primary structure comprises 425 residues: Enolase (425 aa).

Gln163 is a binding site for (2R)-2-phosphoglycerate. Catalysis depends on Glu205, which acts as the Proton donor. Residues Asp242, Glu285, and Asp312 each contribute to the Mg(2+) site. (2R)-2-phosphoglycerate contacts are provided by Lys337, Arg366, Ser367, and Lys388. The active-site Proton acceptor is the Lys337.

Belongs to the enolase family. Mg(2+) is required as a cofactor.

The protein localises to the cytoplasm. It localises to the secreted. It is found in the cell surface. It carries out the reaction (2R)-2-phosphoglycerate = phosphoenolpyruvate + H2O. It functions in the pathway carbohydrate degradation; glycolysis; pyruvate from D-glyceraldehyde 3-phosphate: step 4/5. In terms of biological role, catalyzes the reversible conversion of 2-phosphoglycerate (2-PG) into phosphoenolpyruvate (PEP). It is essential for the degradation of carbohydrates via glycolysis. The polypeptide is Enolase (Ruegeria sp. (strain TM1040) (Silicibacter sp.)).